Here is a 368-residue protein sequence, read N- to C-terminus: UDP-N-acetylglucosamine--N-acetylmuramyl-(pentapeptide) pyrophosphoryl-undecaprenol N-acetylglucosamine transferase (368 aa).

Residues 10–12 (TGG), asparagine 128, arginine 170, serine 199, isoleucine 250, and glutamine 295 each bind UDP-N-acetyl-alpha-D-glucosamine.

It belongs to the glycosyltransferase 28 family. MurG subfamily.

The protein resides in the cell inner membrane. It carries out the reaction di-trans,octa-cis-undecaprenyl diphospho-N-acetyl-alpha-D-muramoyl-L-alanyl-D-glutamyl-meso-2,6-diaminopimeloyl-D-alanyl-D-alanine + UDP-N-acetyl-alpha-D-glucosamine = di-trans,octa-cis-undecaprenyl diphospho-[N-acetyl-alpha-D-glucosaminyl-(1-&gt;4)]-N-acetyl-alpha-D-muramoyl-L-alanyl-D-glutamyl-meso-2,6-diaminopimeloyl-D-alanyl-D-alanine + UDP + H(+). The protein operates within cell wall biogenesis; peptidoglycan biosynthesis. Functionally, cell wall formation. Catalyzes the transfer of a GlcNAc subunit on undecaprenyl-pyrophosphoryl-MurNAc-pentapeptide (lipid intermediate I) to form undecaprenyl-pyrophosphoryl-MurNAc-(pentapeptide)GlcNAc (lipid intermediate II). The sequence is that of UDP-N-acetylglucosamine--N-acetylmuramyl-(pentapeptide) pyrophosphoryl-undecaprenol N-acetylglucosamine transferase from Chlorobium phaeovibrioides (strain DSM 265 / 1930) (Prosthecochloris vibrioformis (strain DSM 265)).